Here is a 386-residue protein sequence, read N- to C-terminus: 8-amino-7-oxononanoate synthase (386 aa).

Arg-19 is a binding site for substrate. Gly-106–Tyr-107 contributes to the pyridoxal 5'-phosphate binding site. Residue His-131 coordinates substrate. Ser-177, His-205, and Thr-233 together coordinate pyridoxal 5'-phosphate. Lys-236 bears the N6-(pyridoxal phosphate)lysine mark. Thr-350 serves as a coordination point for substrate.

This sequence belongs to the class-II pyridoxal-phosphate-dependent aminotransferase family. BioF subfamily. In terms of assembly, homodimer. Pyridoxal 5'-phosphate serves as cofactor.

It catalyses the reaction 6-carboxyhexanoyl-[ACP] + L-alanine + H(+) = (8S)-8-amino-7-oxononanoate + holo-[ACP] + CO2. The protein operates within cofactor biosynthesis; biotin biosynthesis. Functionally, catalyzes the decarboxylative condensation of pimeloyl-[acyl-carrier protein] and L-alanine to produce 8-amino-7-oxononanoate (AON), [acyl-carrier protein], and carbon dioxide. The chain is 8-amino-7-oxononanoate synthase from Alcanivorax borkumensis (strain ATCC 700651 / DSM 11573 / NCIMB 13689 / SK2).